Here is a 145-residue protein sequence, read N- to C-terminus: uncharacterized protein (145 aa).

The N-terminal stretch at 1-20 (MPSKVCTLILLFSVINQMKC) is a signal peptide.

This is an uncharacterized protein from Caenorhabditis elegans.